The chain runs to 63 residues: Large ribosomal subunit protein bL35 (63 aa).

The protein belongs to the bacterial ribosomal protein bL35 family.

The chain is Large ribosomal subunit protein bL35 from Campylobacter fetus subsp. fetus (strain 82-40).